Consider the following 412-residue polypeptide: UV DNA damage endonuclease (412 aa).

It belongs to the uve1/UvsE family.

Its function is as follows. Component in a DNA repair pathway. Removal of UV LIGHT damaged nucleotides. Recognizes pyrimidine dimers and cleave a phosphodiester bond immediately 5' to the lesion. This Clostridium perfringens (strain 13 / Type A) protein is UV DNA damage endonuclease.